The following is a 293-amino-acid chain: Formamidopyrimidine-DNA glycosylase (293 aa).

Catalysis depends on proline 2, which acts as the Schiff-base intermediate with DNA. The Proton donor role is filled by glutamate 3. Residue lysine 61 is the Proton donor; for beta-elimination activity of the active site. Positions 104, 123, and 169 each coordinate DNA. An FPG-type zinc finger spans residues 255–289; the sequence is DAYGREGEPCRRCGAIMRRDKFMNRSSFYCPRCQP. The active-site Proton donor; for delta-elimination activity is arginine 279.

It belongs to the FPG family. Monomer. It depends on Zn(2+) as a cofactor.

The enzyme catalyses Hydrolysis of DNA containing ring-opened 7-methylguanine residues, releasing 2,6-diamino-4-hydroxy-5-(N-methyl)formamidopyrimidine.. The catalysed reaction is 2'-deoxyribonucleotide-(2'-deoxyribose 5'-phosphate)-2'-deoxyribonucleotide-DNA = a 3'-end 2'-deoxyribonucleotide-(2,3-dehydro-2,3-deoxyribose 5'-phosphate)-DNA + a 5'-end 5'-phospho-2'-deoxyribonucleoside-DNA + H(+). Involved in base excision repair of DNA damaged by oxidation or by mutagenic agents. Acts as a DNA glycosylase that recognizes and removes damaged bases. Has a preference for oxidized purines, such as 7,8-dihydro-8-oxoguanine (8-oxoG). Has AP (apurinic/apyrimidinic) lyase activity and introduces nicks in the DNA strand. Cleaves the DNA backbone by beta-delta elimination to generate a single-strand break at the site of the removed base with both 3'- and 5'-phosphates. In Mycolicibacterium vanbaalenii (strain DSM 7251 / JCM 13017 / BCRC 16820 / KCTC 9966 / NRRL B-24157 / PYR-1) (Mycobacterium vanbaalenii), this protein is Formamidopyrimidine-DNA glycosylase.